Reading from the N-terminus, the 346-residue chain is D-alanine--D-alanine ligase (346 aa).

An ATP-grasp domain is found at 134–340 (KFLAESLGVK…IDYTYIHSIQ (207 aa)). 161–212 (EYPVIIKPVRLGSSIGVSIVKSEAELDYALDVAFEFDNDVIVEPFIDGVKEF) is an ATP binding site. Residues D284, E296, and N298 each contribute to the Mg(2+) site.

This sequence belongs to the D-alanine--D-alanine ligase family. Mg(2+) is required as a cofactor. It depends on Mn(2+) as a cofactor.

It localises to the cytoplasm. The enzyme catalyses 2 D-alanine + ATP = D-alanyl-D-alanine + ADP + phosphate + H(+). Its pathway is cell wall biogenesis; peptidoglycan biosynthesis. Functionally, cell wall formation. The polypeptide is D-alanine--D-alanine ligase (Sulfurovum sp. (strain NBC37-1)).